The sequence spans 202 residues: MSTLIYVDKENGEPGIHVAPKDGLKLGSVPSVKALDGRSQVSTPHVGKMFDAPPALPKTARKALGTVNRATEKSVKTNGPLKQKQTTFSTKKITEKTVKAKSSVPASDDTYPEIEKFFPFNPLDFENFDLPEEHQIARLPLSGVPLMILDEERELEQLLHVGPPSPLKMPPLLWESNLLQSPSSILSTLDVELPPVCCDLDI.

Positions 36-55 (DGRSQVSTPHVGKMFDAPPA) are disordered. The short motif at 61 to 64 (RKAL) is the D-box element. 2 short sequence motifs (TEK-box) span residues 71–73 (TEK) and 94–96 (TEK). The SH3-binding motif lies at 163–173 (PPSPLKMPPLL). The residue at position 165 (serine 165) is a Phosphoserine; by CDK1.

It belongs to the securin family. In terms of assembly, interacts with RPS10 and DNAJA1. Interacts with the caspase-like ESPL1, and prevents its protease activity probably by covering its active site. Interacts with TP53 and blocks its activity probably by blocking its binding to DNA. Interacts with the Ku 70 kDa subunit of ds-DNA kinase. Interacts with PTTG1IP. Phosphorylated at Ser-165 by CDK1 during mitosis. Post-translationally, phosphorylated in vitro by ds-DNA kinase. In terms of processing, ubiquitinated through 'Lys-11' linkage of ubiquitin moieties by the anaphase promoting complex (APC) at the onset of anaphase, conducting to its degradation. 'Lys-11'-linked ubiquitination is mediated by the E2 ligase UBE2C/UBCH10.

The protein localises to the cytoplasm. Its subcellular location is the nucleus. In terms of biological role, regulatory protein, which plays a central role in chromosome stability, in the p53/TP53 pathway, and DNA repair. Probably acts by blocking the action of key proteins. During the mitosis, it blocks Separase/ESPL1 function, preventing the proteolysis of the cohesin complex and the subsequent segregation of the chromosomes. At the onset of anaphase, it is ubiquitinated, conducting to its destruction and to the liberation of ESPL1. Its function is however not limited to a blocking activity, since it is required to activate ESPL1. Negatively regulates the transcriptional activity and related apoptosis activity of TP53. The negative regulation of TP53 may explain the strong transforming capability of the protein when it is overexpressed. May also play a role in DNA repair via its interaction with Ku, possibly by connecting DNA damage-response pathways with sister chromatid separation. This is Securin (PTTG1) from Bos taurus (Bovine).